Here is a 1063-residue protein sequence, read N- to C-terminus: Structural polyprotein (1063 aa).

The disordered stretch occupies residues 1-131; that stretch reads MASTTPITME…LGPPTNPFQA (131 aa). Positions 30–69 are human C1QBP/SF2P32-binding; the sequence is GASQPRRPRPPRQRDSSTSGDDSGRDSGGPRRRRGNRGRG. Ser-46 carries the phosphoserine; by host modification. The span at 59-69 shows a compositional bias: basic residues; the sequence is PRRRRGNRGRG. Residues 70-87 show a composition bias toward basic and acidic residues; sequence QRKDWSRAPPPPEERQEG. Over residues 93 to 107 the composition is skewed to pro residues; it reads APKPSRAPPQQPQPP. A disulfide bond links Cys-153 and Cys-197. The functions as E2 signal peptide stretch occupies residues 279–300; sequence GAPQAFLAGLLLAAVAVGTARA. Over 301–534 the chain is Extracellular; it reads GLQPRVDMAA…LWLATANALS (234 aa). 3 N-linked (GlcNAc...) asparagine; by host glycosylation sites follow: Asn-353, Asn-371, and Asn-429. Residues 535–555 form a helical membrane-spanning segment; it reads LDHALAAFVLLVPWVLIFMVC. Over 556 to 582 the chain is Cytoplasmic; that stretch reads RRACRRRGAAAALTAVVLQGYNPPAYG. Positions 563–582 are functions as E1 signal peptide; it reads GAAAALTAVVLQGYNPPAYG. At 583-1028 the chain is on the extracellular side; sequence EEAFTYLCTA…QTWAEWAAAH (446 aa). 8 disulfide bridges follow: Cys-590–Cys-595, Cys-619–Cys-824, Cys-641–Cys-653, Cys-699–Cys-712, Cys-758–Cys-767, Cys-807–Cys-817, Cys-931–Cys-934, and Cys-950–Cys-983. N-linked (GlcNAc...) asparagine; by host glycosylation occurs at Asn-658. Ca(2+) contacts are provided by Asn-670 and Ala-671. Ca(2+)-binding residues include Asp-718 and Thr-719. Asn-791 carries an N-linked (GlcNAc...) asparagine; by host glycan. O-linked (GalNAc...) threonine; by host glycosylation is found at Thr-1011 and Thr-1012. The helical transmembrane segment at 1029-1049 threads the bilayer; it reads WWQLTLGAICALPLAGLLACC. Residues 1050 to 1063 lie on the Extracellular side of the membrane; the sequence is AKCLYYLRGAIAPR.

Homodimer; further assembles into homooligomer. Interacts with human C1QBP. Interacts (via N-terminus) with protease/methyltransferase p150. As to quaternary structure, heterodimer with spike glycoprotein E2. In terms of assembly, heterodimer with spike glycoprotein E1. In terms of processing, structural polyprotein: Specific enzymatic cleavages in vivo yield mature proteins. Two signal peptidase-mediated cleavages within the polyprotein produce the structural proteins capsid, E2, and E1. The E2 signal peptide remains attached to the C-terminus of the capsid protein after cleavage by the signal peptidase. Another signal peptide at E2 C-terminus directs E1 to the ER, with a similar mechanism. Post-translationally, contains three N-linked oligosaccharides. Capsid is phosphorylated on Ser-46 by host. This phosphorylation negatively regulates capsid protein RNA-binding activity. Dephosphorylated by human PP1A.

The protein resides in the virion. Its subcellular location is the host cytoplasm. It localises to the host mitochondrion. It is found in the virion membrane. The protein localises to the host Golgi apparatus membrane. Its function is as follows. Capsid protein interacts with genomic RNA and assembles into icosahedric core particles 65-70 nm in diameter. The resulting nucleocapsid eventually associates with the cytoplasmic domain of E2 at the cell membrane, leading to budding and formation of mature virions from host Golgi membranes. Phosphorylation negatively regulates RNA-binding activity, possibly delaying virion assembly during the viral replication phase. Capsid protein dimerizes and becomes disulfide-linked in the virion. Modulates genomic RNA replication. Modulates subgenomic RNA synthesis by interacting with human C1QBP/SF2P32. Induces both perinuclear clustering of mitochondria and the formation of electron-dense intermitochondrial plaques, both hallmarks of rubella virus infected cells. Induces apoptosis when expressed in transfected cells. In terms of biological role, responsible for viral attachment to target host cell, by binding to the cell receptor. Its transport to the plasma membrane depends on interaction with E1 protein. The surface glycoproteins display an irregular helical organization and a pseudo-tetrameric inner nucleocapsid arrangement. Functionally, class II viral fusion protein. Fusion activity is inactive as long as E1 is bound to E2 in mature virion. After virus attachment to target cell and clathrin-mediated endocytosis, acidification of the endosome would induce dissociation of E1/E2 heterodimer and concomitant trimerization of the E1 subunits. This E1 homotrimer is fusion active, and promotes release of viral nucleocapsid in cytoplasm after endosome and viral membrane fusion. The cytoplasmic tail of spike glycoprotein E1 modulates virus release. The surface glycoproteins display an irregular helical organization and a pseudo-tetrameric inner nucleocapsid arrangement. In Rubella virus (strain Cendehill) (RUBV), this protein is Structural polyprotein.